Here is a 533-residue protein sequence, read N- to C-terminus: Cytochrome P450 9e2 (533 aa).

Heme is bound at residue Cys-475.

This sequence belongs to the cytochrome P450 family. It depends on heme as a cofactor.

The protein localises to the endoplasmic reticulum membrane. Its subcellular location is the microsome membrane. The protein is Cytochrome P450 9e2 (CYP9E2) of Blattella germanica (German cockroach).